The chain runs to 619 residues: Translation initiation factor IF-2 (619 aa).

In terms of domain architecture, tr-type G spans 120–289 (PRPPIVTIMG…ILLLGEVEGY (170 aa)). The segment at 129-136 (GHVDHGKT) is G1. Position 129–136 (129–136 (GHVDHGKT)) interacts with GTP. Residues 154 to 158 (GITQK) are G2. Positions 176–179 (DTPG) are G3. GTP contacts are provided by residues 176-180 (DTPGH) and 230-233 (NKMD). The G4 stretch occupies residues 230-233 (NKMD). Residues 266–268 (SAL) form a G5 region.

Belongs to the TRAFAC class translation factor GTPase superfamily. Classic translation factor GTPase family. IF-2 subfamily.

Its subcellular location is the cytoplasm. In terms of biological role, one of the essential components for the initiation of protein synthesis. Protects formylmethionyl-tRNA from spontaneous hydrolysis and promotes its binding to the 30S ribosomal subunits. Also involved in the hydrolysis of GTP during the formation of the 70S ribosomal complex. The polypeptide is Translation initiation factor IF-2 (infB) (Mycoplasma genitalium (strain ATCC 33530 / DSM 19775 / NCTC 10195 / G37) (Mycoplasmoides genitalium)).